Consider the following 591-residue polypeptide: Aspartate--tRNA(Asp/Asn) ligase (591 aa).

Residue E174 participates in L-aspartate binding. Positions Q198 to K201 are aspartate. R220 contacts L-aspartate. ATP contacts are provided by residues R220–E222 and Q229. Position 450 (H450) interacts with L-aspartate. ATP is bound at residue E483. Residue R490 participates in L-aspartate binding. Residue G535–R538 coordinates ATP.

This sequence belongs to the class-II aminoacyl-tRNA synthetase family. Type 1 subfamily. As to quaternary structure, homodimer.

It is found in the cytoplasm. It catalyses the reaction tRNA(Asx) + L-aspartate + ATP = L-aspartyl-tRNA(Asx) + AMP + diphosphate. In terms of biological role, aspartyl-tRNA synthetase with relaxed tRNA specificity since it is able to aspartylate not only its cognate tRNA(Asp) but also tRNA(Asn). Reaction proceeds in two steps: L-aspartate is first activated by ATP to form Asp-AMP and then transferred to the acceptor end of tRNA(Asp/Asn). The chain is Aspartate--tRNA(Asp/Asn) ligase from Pseudomonas putida (strain ATCC 700007 / DSM 6899 / JCM 31910 / BCRC 17059 / LMG 24140 / F1).